Consider the following 452-residue polypeptide: MHWTVFLLRGIVGFLWSGWVQVGYAKGGLGDNHVHSSFIYRRLRNHERREIQREILSILGLPHRPRPFSPGKQASSAPLFMLDLYNAMASEDNPEEYLVRVSLAGEAKETRKGYPASPNGYAHRLHLPPRTPLTTQSPPLASLHDTNFLNDADMVMSFVNLVERDKDFSHQRRHYKEFRFDLTQIPHGEAVTAAEFRIYKDKGNHRFENETIKISIYQIIKEYTNRDADLFLLDTRKTQALDVGWLVFDITVTSNHWVINPQNNLGLQLCAETGDGRSINVKSAGLVGRHGPQSKQPFMVAFFKASEVLLRSVRAASKRKNQNRNKSNSHQDPSRMPSAGDYNTSEQKQACKKHELYVSFRDLGWQDWIIAPEGYAAFYCDGECSFPLNAHMNATNHAIVQTLVHLMFPDHVPKPCCAPTKLNAISVLYFDDSSNVILKKYRNMVVRSCGCH.

An N-terminal signal peptide occupies residues 1–25 (MHWTVFLLRGIVGFLWSGWVQVGYA). A propeptide spanning residues 26 to 314 (KGGLGDNHVH…ASEVLLRSVR (289 aa)) is cleaved from the precursor. 4 N-linked (GlcNAc...) asparagine glycosylation sites follow: asparagine 209, asparagine 325, asparagine 343, and asparagine 393. The tract at residues 316–345 (ASKRKNQNRNKSNSHQDPSRMPSAGDYNTS) is disordered. 3 disulfides stabilise this stretch: cysteine 351/cysteine 417, cysteine 380/cysteine 449, and cysteine 384/cysteine 451.

This sequence belongs to the TGF-beta family. As to quaternary structure, interacts with ERFE; the interaction inhibits BMP-induced transcription of HAMP.

The protein resides in the secreted. Its function is as follows. Growth factor of the TGF-beta superfamily that plays essential roles in many developmental processes, including cartilage and bone formation or neurogenesis. Initiates the canonical BMP signaling cascade by associating with type I receptor BMPR1A and type II receptor BMPR2. In turn, BMPR1A propagates signal by phosphorylating SMAD1/5/8 that travel to the nucleus and act as activators and repressors of transcription of target genes. Can also signal through non-canonical pathway such as MAPK p38 signaling cascade to promote chondrogenic differentiation. Promotes the expression of HAMP, this is repressed by its interaction with ERFE. The polypeptide is Bone morphogenetic protein 5 (Bmp5) (Mus musculus (Mouse)).